A 159-amino-acid polypeptide reads, in one-letter code: MSPISPPASGVGLGYGIAIAVSILVLISFIMLASYICIRSKSTGRDEATSDVVLDLPSPAAEVKLGLDRPVIESYPRIVLGDSRRLPRPNNGPCSICLCDYEAREPVRCIPECNHCFHTDCVDEWLRTSATCPLCRNSPAPSRLATPLSDLVPLAFQIR.

The helical transmembrane segment at 13-33 threads the bilayer; sequence LGYGIAIAVSILVLISFIMLA. Residues 94–136 form an RING-type; atypical zinc finger; the sequence is CSICLCDYEAREPVRCIPECNHCFHTDCVDEWLRTSATCPLCR.

Belongs to the RING-type zinc finger family. ATL subfamily.

The protein resides in the membrane. The catalysed reaction is S-ubiquitinyl-[E2 ubiquitin-conjugating enzyme]-L-cysteine + [acceptor protein]-L-lysine = [E2 ubiquitin-conjugating enzyme]-L-cysteine + N(6)-ubiquitinyl-[acceptor protein]-L-lysine.. Its pathway is protein modification; protein ubiquitination. This is Putative RING-H2 finger protein ATL69 (ATL69) from Arabidopsis thaliana (Mouse-ear cress).